Here is a 252-residue protein sequence, read N- to C-terminus: Carboxymethylenebutenolidase (252 aa).

Residues 1–28 (MCHNKSSAPPTPAHISIQQNRTPGTDPV) form a disordered region. Residues Cys-126, Asp-183, and His-214 contribute to the active site.

The protein belongs to the dienelactone hydrolase family.

It carries out the reaction 2-(5-oxo-2,5-dihydrofuran-2-ylidene)acetate + H2O = 4-oxohex-2-enedioate + H(+). It functions in the pathway aromatic compound metabolism; 3-chlorocatechol degradation. Functionally, ring cleavage of cyclic ester dienelactone to produce maleylacetate. In Rhodococcus opacus (Nocardia opaca), this protein is Carboxymethylenebutenolidase (clcD).